The sequence spans 533 residues: D-3-phosphoglycerate dehydrogenase (533 aa).

Position 2 is an N-acetylalanine (Ala2). The residue at position 14 (Ser14) is a Phosphoserine. At Lys21 the chain carries N6-acetyllysine; alternate. Lys21 participates in a covalent cross-link: Glycyl lysine isopeptide (Lys-Gly) (interchain with G-Cter in SUMO1); alternate. A Glycyl lysine isopeptide (Lys-Gly) (interchain with G-Cter in SUMO2); alternate cross-link involves residue Lys21. The residue at position 58 (Lys58) is an N6-acetyllysine. Residues Thr78, Arg155 to Ile156, Asp175, Thr207, Cys234 to Arg236, and Asp260 contribute to the NAD(+) site. Thr78 bears the Phosphothreonine mark. Arg236 is a catalytic residue. The active site involves Glu265. His283 acts as the Proton donor in catalysis. His283–Ala286 serves as a coordination point for NAD(+).

The protein belongs to the D-isomer specific 2-hydroxyacid dehydrogenase family. Homotetramer.

The enzyme catalyses (2R)-3-phosphoglycerate + NAD(+) = 3-phosphooxypyruvate + NADH + H(+). It catalyses the reaction (R)-2-hydroxyglutarate + NAD(+) = 2-oxoglutarate + NADH + H(+). The catalysed reaction is (S)-malate + NAD(+) = oxaloacetate + NADH + H(+). The protein operates within amino-acid biosynthesis; L-serine biosynthesis; L-serine from 3-phospho-D-glycerate: step 1/3. Functionally, catalyzes the reversible oxidation of 3-phospho-D-glycerate to 3-phosphonooxypyruvate, the first step of the phosphorylated L-serine biosynthesis pathway. Also catalyzes the reversible oxidation of 2-hydroxyglutarate to 2-oxoglutarate and the reversible oxidation of (S)-malate to oxaloacetate. The chain is D-3-phosphoglycerate dehydrogenase (PHGDH) from Pongo abelii (Sumatran orangutan).